The primary structure comprises 706 residues: Serine/threonine-protein kinase BUR1 (706 aa).

One can recognise a Protein kinase domain in the interval 38–339 (YKPLGKIGEG…AIGGKNHAYF (302 aa)). ATP contacts are provided by residues 44-52 (IGEGTFGEV) and K67. D168 acts as the Proton acceptor in catalysis. Basic and acidic residues-rich tracts occupy residues 360–523 (LDNH…RDSR), 545–570 (DYDR…DMTR), and 594–623 (DKVE…KSRD). The disordered stretch occupies residues 360–706 (LDNHKRREQE…YGRKRPRIER (347 aa)). Residues 625–648 (GPPPGPPLPADGPPPPPSSNPPRP) show a composition bias toward pro residues. The segment covering 659 to 706 (WRRDSRDRRESRDRDGRDRDGRDRRLSSSRYARDEFDEYGRKRPRIER) has biased composition (basic and acidic residues).

The protein belongs to the protein kinase superfamily. CMGC Ser/Thr protein kinase family. CDC2/CDKX subfamily.

The protein resides in the nucleus. The catalysed reaction is L-seryl-[protein] + ATP = O-phospho-L-seryl-[protein] + ADP + H(+). The enzyme catalyses L-threonyl-[protein] + ATP = O-phospho-L-threonyl-[protein] + ADP + H(+). It carries out the reaction [DNA-directed RNA polymerase] + ATP = phospho-[DNA-directed RNA polymerase] + ADP + H(+). Serine/threonine-protein kinase involved in transcription regulation. Phosphorylates the UBC2/RAD6 ubiquitin-conjugating enzyme (E2), leading to monoubiquitination of histone H2B and the silencing of telomeric-associated genes. Also required for histone H3 methylation. Necessary for the recovery from pheromone-induced growth arrest in the cell cycle G1 phase. The chain is Serine/threonine-protein kinase BUR1 (BUR1) from Yarrowia lipolytica (strain CLIB 122 / E 150) (Yeast).